We begin with the raw amino-acid sequence, 1594 residues long: NAD-specific glutamate dehydrogenase (1594 aa).

The active site involves Lys816.

The protein belongs to the Glu/Leu/Phe/Val dehydrogenases family. In terms of assembly, interacts with (unphosphorylated) GarA.

It carries out the reaction L-glutamate + NAD(+) + H2O = 2-oxoglutarate + NH4(+) + NADH + H(+). Activity is inhibited by unphosphorylated GarA. Stimulated by manganese and magnesium. Catalyzes the reversible conversion of L-glutamate to 2-oxoglutarate. Highly specific for NAD. The protein is NAD-specific glutamate dehydrogenase (gdh) of Mycolicibacterium smegmatis (strain ATCC 700084 / mc(2)155) (Mycobacterium smegmatis).